The chain runs to 177 residues: Large ribosomal subunit protein uL6 (177 aa).

This sequence belongs to the universal ribosomal protein uL6 family. Part of the 50S ribosomal subunit.

Functionally, this protein binds to the 23S rRNA, and is important in its secondary structure. It is located near the subunit interface in the base of the L7/L12 stalk, and near the tRNA binding site of the peptidyltransferase center. The sequence is that of Large ribosomal subunit protein uL6 from Yersinia enterocolitica serotype O:8 / biotype 1B (strain NCTC 13174 / 8081).